Here is a 111-residue protein sequence, read N- to C-terminus: Putative single-stranded DNA-binding protein ycf41 (111 aa).

The region spanning 1–98 is the SSB domain; the sequence is MNSCTLLVQI…FSTSRIFKYK (98 aa).

Its subcellular location is the plastid. It is found in the chloroplast. The protein is Putative single-stranded DNA-binding protein ycf41 (ycf41) of Pyropia yezoensis (Susabi-nori).